We begin with the raw amino-acid sequence, 161 residues long: DNA-directed RNA polymerase 18 kDa subunit (161 aa).

It belongs to the poxviridae DNA-directed RNA polymerase 18 kDa subunit family. In terms of assembly, the DNA-dependent RNA polymerase used for intermediate and late genes expression consists of eight subunits Rpo30/OPG66, Rpo7/OPG90, Rpo22/OPG103, Rpo147/OPG105, Rpo18/OPG119, Rpo19/OPG131, Rpo132/OPG151 and Rpo35/OPG156. The same holoenzyme, with the addition of the transcription-specificity factor OPG109, is used for early gene expression.

It is found in the virion. The catalysed reaction is RNA(n) + a ribonucleoside 5'-triphosphate = RNA(n+1) + diphosphate. In terms of biological role, part of the DNA-dependent RNA polymerase which catalyzes the transcription of viral DNA into RNA using the four ribonucleoside triphosphates as substrates. Responsible for the transcription of early, intermediate and late genes. DNA-dependent RNA polymerase associates with the early transcription factor (ETF), itself composed of OPG118 and OPG133, thereby allowing the early genes transcription. Late transcription, and probably also intermediate transcription, require newly synthesized RNA polymerase. The polypeptide is DNA-directed RNA polymerase 18 kDa subunit (OPG119) (Vaccinia virus (strain Ankara) (VACV)).